A 115-amino-acid polypeptide reads, in one-letter code: Small ribosomal subunit protein bS6 (115 aa).

Belongs to the bacterial ribosomal protein bS6 family.

In terms of biological role, binds together with bS18 to 16S ribosomal RNA. The polypeptide is Small ribosomal subunit protein bS6 (Syntrophotalea carbinolica (strain DSM 2380 / NBRC 103641 / GraBd1) (Pelobacter carbinolicus)).